Here is a 118-residue protein sequence, read N- to C-terminus: RxLR effector protein PITG_19617 (118 aa).

An N-terminal signal peptide occupies residues 1–21 (MRAVYILAMACAATLQASSSA). The RxLR-dEER motif lies at 50–64 (RLLRVEDKEEETEEE).

Belongs to the RxLR effector family.

It localises to the secreted. The protein localises to the host nucleus. The protein resides in the host cytoplasm. Its function is as follows. Effector that enhances P.infestans colonization of Nicotiana benthamiana leaves. This Phytophthora infestans (strain T30-4) (Potato late blight agent) protein is RxLR effector protein PITG_19617.